A 348-amino-acid polypeptide reads, in one-letter code: Phosphate acyltransferase (348 aa).

It belongs to the PlsX family. Homodimer. Probably interacts with PlsY.

The protein resides in the cytoplasm. It carries out the reaction a fatty acyl-[ACP] + phosphate = an acyl phosphate + holo-[ACP]. The protein operates within lipid metabolism; phospholipid metabolism. Catalyzes the reversible formation of acyl-phosphate (acyl-PO(4)) from acyl-[acyl-carrier-protein] (acyl-ACP). This enzyme utilizes acyl-ACP as fatty acyl donor, but not acyl-CoA. This is Phosphate acyltransferase from Lactiplantibacillus plantarum (strain ATCC BAA-793 / NCIMB 8826 / WCFS1) (Lactobacillus plantarum).